Here is a 166-residue protein sequence, read N- to C-terminus: Interleukin-2 (166 aa).

An N-terminal signal peptide occupies residues 1 to 20 (MYSMQLASCVTLTLVLLVNS). Thr23 carries an O-linked (GalNAc...) threonine glycan. A disulfide bridge connects residues Cys89 and Cys137.

Belongs to the IL-2 family.

Its subcellular location is the secreted. Its function is as follows. Cytokine produced by activated CD4-positive helper T-cells and to a lesser extend activated CD8-positive T-cells and natural killer (NK) cells that plays pivotal roles in the immune response and tolerance. Binds to a receptor complex composed of either the high-affinity trimeric IL-2R (IL2RA/CD25, IL2RB/CD122 and IL2RG/CD132) or the low-affinity dimeric IL-2R (IL2RB and IL2RG). Interaction with the receptor leads to oligomerization and conformation changes in the IL-2R subunits resulting in downstream signaling starting with phosphorylation of JAK1 and JAK3. In turn, JAK1 and JAK3 phosphorylate the receptor to form a docking site leading to the phosphorylation of several substrates including STAT5. This process leads to activation of several pathways including STAT, phosphoinositide-3-kinase/PI3K and mitogen-activated protein kinase/MAPK pathways. Functions as a T-cell growth factor and can increase NK-cell cytolytic activity as well. Promotes strong proliferation of activated B-cells and subsequently immunoglobulin production. Plays a pivotal role in regulating the adaptive immune system by controlling the survival and proliferation of regulatory T-cells, which are required for the maintenance of immune tolerance. Moreover, participates in the differentiation and homeostasis of effector T-cell subsets, including Th1, Th2, Th17 as well as memory CD8-positive T-cells. In Mus spretus (Western Mediterranean mouse), this protein is Interleukin-2 (Il2).